We begin with the raw amino-acid sequence, 439 residues long: Probable cinnamyl alcohol dehydrogenase 8C (439 aa).

C120 contacts Zn(2+). T122 provides a ligand contact to NADP(+). The Zn(2+) site is built by H142, E143, C173, C176, C179, C187, and C239. NADP(+) contacts are provided by residues T243, 264–269, 287–292, T327, G351, and 374–376; these read GLGGLG, STSPGK, and NCV.

Belongs to the zinc-containing alcohol dehydrogenase family. In terms of assembly, homodimer. Requires Zn(2+) as cofactor.

The enzyme catalyses (E)-cinnamyl alcohol + NADP(+) = (E)-cinnamaldehyde + NADPH + H(+). It catalyses the reaction (E)-coniferol + NADP(+) = (E)-coniferaldehyde + NADPH + H(+). The catalysed reaction is (E)-sinapyl alcohol + NADP(+) = (E)-sinapaldehyde + NADPH + H(+). It carries out the reaction (E)-4-coumaroyl alcohol + NADP(+) = (E)-4-coumaraldehyde + NADPH + H(+). The enzyme catalyses (E)-caffeyl alcohol + NADP(+) = (E)-caffeyl aldehyde + NADPH + H(+). Its pathway is aromatic compound metabolism; phenylpropanoid biosynthesis. Its function is as follows. Involved in lignin biosynthesis. Catalyzes the final step specific for the production of lignin monomers. Catalyzes the NADPH-dependent reduction of coniferaldehyde, 5-hydroxyconiferaldehyde, sinapaldehyde, 4-coumaraldehyde and caffeyl aldehyde to their respective alcohols. This chain is Probable cinnamyl alcohol dehydrogenase 8C, found in Oryza sativa subsp. japonica (Rice).